The following is a 345-amino-acid chain: Gibberellin 2-beta-dioxygenase 2 (345 aa).

Residues 170–285 enclose the Fe2OG dioxygenase domain; the sequence is HSDSLLRINH…RMSMMYFAAP (116 aa). 3 residues coordinate Fe cation: histidine 209, aspartate 211, and histidine 266. The active site involves arginine 276.

The protein belongs to the iron/ascorbate-dependent oxidoreductase family. GA2OX subfamily. Requires Fe cation as cofactor. Predominantly expressed in leaves.

It catalyses the reaction gibberellin A1 + 2-oxoglutarate + O2 = gibberellin A8 + succinate + CO2. It participates in plant hormone biosynthesis; gibberellin biosynthesis. In terms of biological role, catalyzes the 2-beta-hydroxylation of several biologically active gibberellins, leading to the homeostatic regulation of their endogenous level. Catabolism of gibberellins (GAs) plays a central role in plant development. Converts GA9/GA20 to GA51/GA29 and GA4/GA1 to GA34/GA8. The chain is Gibberellin 2-beta-dioxygenase 2 (GA2OX2) from Pisum sativum (Garden pea).